A 465-amino-acid polypeptide reads, in one-letter code: Lactaldehyde dehydrogenase (465 aa).

Glycine 220–glycine 225 contacts NAD(+). Residues glutamate 240 and cysteine 274 contribute to the active site.

The protein belongs to the aldehyde dehydrogenase family. In terms of assembly, homotetramer.

The catalysed reaction is (S)-lactaldehyde + NAD(+) + H2O = (S)-lactate + NADH + 2 H(+). It participates in cofactor biosynthesis; coenzyme F420 biosynthesis. In terms of biological role, involved in F420 biosynthesis through the oxidation of lactaldehyde to lactate. The polypeptide is Lactaldehyde dehydrogenase (Methanococcus maripaludis (strain C5 / ATCC BAA-1333)).